The primary structure comprises 200 residues: MAFELPNLPYDYDALAPYMSRETLEYHHDKHHLAYVTNGNKLAEEAGLSDLSLEDIVKKSYGTNQPLFNNAGQHYNHVHFWKWMKKGGGGTSLPGKLDAAIKSDLGGYDKFRADFSAAGAGQFGSGWAWLSVKNGKLEISKTPNGENPLVHGATPILGVDVWEHSYYIDYRNARPKYLEAFVDNLINWDYVLELYEAAAK.

Mn(2+) is bound by residues H27, H77, D160, and H164.

The protein belongs to the iron/manganese superoxide dismutase family. Homodimer. Requires Mn(2+) as cofactor.

It catalyses the reaction 2 superoxide + 2 H(+) = H2O2 + O2. In terms of biological role, destroys superoxide anion radicals which are normally produced within the cells and which are toxic to biological systems. The sequence is that of Superoxide dismutase [Mn] (sodB) from Rhizobium meliloti (strain 1021) (Ensifer meliloti).